The primary structure comprises 251 residues: Small ribosomal subunit protein uS2 (251 aa).

This sequence belongs to the universal ribosomal protein uS2 family.

In Novosphingobium aromaticivorans (strain ATCC 700278 / DSM 12444 / CCUG 56034 / CIP 105152 / NBRC 16084 / F199), this protein is Small ribosomal subunit protein uS2.